Consider the following 462-residue polypeptide: Anthranilate synthase component 1 (462 aa).

L-tryptophan is bound by residues Ser-37 and 244-246 (PYM). 279-280 (GT) is a binding site for chorismate. Glu-306 is a Mg(2+) binding site. Chorismate is bound by residues Tyr-394, Arg-414, 428 to 430 (GAG), and Gly-430. Glu-443 contacts Mg(2+).

The protein belongs to the anthranilate synthase component I family. Heterotetramer consisting of two non-identical subunits: a beta subunit (TrpG) and a large alpha subunit (TrpE). Requires Mg(2+) as cofactor.

It catalyses the reaction chorismate + L-glutamine = anthranilate + pyruvate + L-glutamate + H(+). It participates in amino-acid biosynthesis; L-tryptophan biosynthesis; L-tryptophan from chorismate: step 1/5. Feedback inhibited by tryptophan. In terms of biological role, part of a heterotetrameric complex that catalyzes the two-step biosynthesis of anthranilate, an intermediate in the biosynthesis of L-tryptophan. In the first step, the glutamine-binding beta subunit (TrpG) of anthranilate synthase (AS) provides the glutamine amidotransferase activity which generates ammonia as a substrate that, along with chorismate, is used in the second step, catalyzed by the large alpha subunit of AS (TrpE) to produce anthranilate. In the absence of TrpG, TrpE can synthesize anthranilate directly from chorismate and high concentrations of ammonia. The chain is Anthranilate synthase component 1 (trpE) from Thermus thermophilus (strain ATCC 27634 / DSM 579 / HB8).